The primary structure comprises 379 residues: Alcohol dehydrogenase 1 (379 aa).

Residues cysteine 47, threonine 49, histidine 69, cysteine 99, cysteine 102, cysteine 105, cysteine 113, and cysteine 177 each contribute to the Zn(2+) site. An alcohol contacts are provided by threonine 49 and histidine 69. Position 49 (threonine 49) interacts with NAD(+). NAD(+)-binding positions include 202–207 (GLGAVG), aspartate 226, arginine 231, threonine 272, valine 295, 295–297 (VGV), phenylalanine 322, and arginine 372.

Belongs to the zinc-containing alcohol dehydrogenase family. As to quaternary structure, homodimer. Zn(2+) serves as cofactor.

The protein resides in the cytoplasm. It catalyses the reaction a primary alcohol + NAD(+) = an aldehyde + NADH + H(+). It carries out the reaction a secondary alcohol + NAD(+) = a ketone + NADH + H(+). This is Alcohol dehydrogenase 1 (ADH1) from Oryza sativa subsp. indica (Rice).